A 390-amino-acid chain; its full sequence is MVFRQAPVELPGLAPMPGQPFGVYLHVPFCLTRCGYCDFNTYTPAQLGGVSPDRWLLALRAELELAAAKLDAPTVHTVYVGGGTPSLLGGERLATLLDMVRDHFVLAPDAEVSTEANPESTWPEFFATIRAAGYTRVSLGMQSVAPRVLATLDRVHSPGRAAAAATEAIAEGFTHVNLDLIYGTPGESDDDLVRSVDAAVQAGVDHVSAYALVVEHGTALARRVRRGELAAPDDDVLAHRYELVDARLSAAGFAWYEVSNWCRPGGECRHNLGYWDGGQWWGAGPGAHGYIGVTRWWNVKHPNTYAEILAGATLPVAGFEQLGADALHTEDVLLKVRLRQGLPLARLGAAERERAEAVLADGLLDYHGDRLVLTGRGRLLADAVVRTLLG.

Residues 15–254 enclose the Radical SAM core domain; that stretch reads PMPGQPFGVY…DARLSAAGFA (240 aa). Residue Tyr24 coordinates S-adenosyl-L-methionine. Cys30, Cys34, and Cys37 together coordinate [4Fe-4S] cluster. S-adenosyl-L-methionine contacts are provided by residues Gly82, 83-84, Glu115, Gln142, Arg154, and Asp179; that span reads GT.

This sequence belongs to the anaerobic coproporphyrinogen-III oxidase family. HemW subfamily. The cofactor is [4Fe-4S] cluster.

The protein resides in the cytoplasm. Its function is as follows. Probably acts as a heme chaperone, transferring heme to an unknown acceptor. Binds one molecule of heme per monomer, possibly covalently. Binds 1 [4Fe-4S] cluster. The cluster is coordinated with 3 cysteines and an exchangeable S-adenosyl-L-methionine. This chain is Heme chaperone HemW, found in Mycobacterium tuberculosis (strain CDC 1551 / Oshkosh).